A 932-amino-acid polypeptide reads, in one-letter code: Protocadherin gamma-A9 (932 aa).

The N-terminal stretch at 1-28 is a signal peptide; the sequence is MAAPTKCQLRGRLVLLCSLLGMLWEARA. Cadherin domains follow at residues 29–133, 134–242, 243–347, 348–452, 453–562, and 570–683; these read SQIR…APKF, QAES…APVF, AQRI…RPEV, TITS…PPAF, SQAS…APEI, and DGST…IPAD. The Extracellular portion of the chain corresponds to 29 to 692; that stretch reads SQIRYSVPEE…DLEASDLTLY (664 aa). N-linked (GlcNAc...) asparagine glycans are attached at residues Asn47 and Asn127. N-linked (GlcNAc...) asparagine glycosylation is found at Asn389, Asn419, and Asn545. The helical transmembrane segment at 693–713 threads the bilayer; sequence LVVAVAVVSCVFLTFVITLLA. Topologically, residues 714–932 are cytoplasmic; that stretch reads LRLRHWHSSH…KKKSGKKEKK (219 aa). Disordered stretches follow at residues 803 to 841 and 902 to 932; these read DTPL…WPNN and ATLT…KEKK. Residues 816 to 841 show a composition bias toward polar residues; it reads WRFSQAQRPGTSGSQNGDDTGTWPNN. Positions 922–932 are enriched in basic residues; it reads NKKKSGKKEKK.

It is found in the cell membrane. Its function is as follows. Potential calcium-dependent cell-adhesion protein. May be involved in the establishment and maintenance of specific neuronal connections in the brain. The polypeptide is Protocadherin gamma-A9 (PCDHGA9) (Homo sapiens (Human)).